We begin with the raw amino-acid sequence, 145 residues long: Ribonuclease HI (145 aa).

One can recognise an RNase H type-1 domain in the interval 1–142 (MNQTVYLYTD…ADDLANRGAA (142 aa)). Mg(2+) contacts are provided by D10, E48, D70, and D134.

Belongs to the RNase H family. Monomer. The cofactor is Mg(2+).

It is found in the cytoplasm. The catalysed reaction is Endonucleolytic cleavage to 5'-phosphomonoester.. Its function is as follows. Endonuclease that specifically degrades the RNA of RNA-DNA hybrids. The polypeptide is Ribonuclease HI (Neisseria meningitidis serogroup B (strain ATCC BAA-335 / MC58)).